The sequence spans 678 residues: Platelet endothelial cell adhesion molecule (678 aa).

An N-terminal signal peptide occupies residues 1–17 (MLLALLLTMLLYASLQA). Over 18–589 (QENSFTINSI…VRVFLAPWKK (572 aa)) the chain is Extracellular. Ig-like C2-type domains lie at 40–126 (GQKL…PEVT), 135–213 (GGIV…FIRS), 225–309 (PKFQ…ILVN), 315–391 (PRPK…LVPV), 413–472 (GQII…NCHS), and 488–577 (PVDE…RSGP). The cysteines at positions 47 and 99 are disulfide-linked. Asparagine 74 and asparagine 141 each carry an N-linked (GlcNAc...) asparagine glycan. Disulfide bonds link cysteine 142/cysteine 195 and cysteine 245/cysteine 293. N-linked (GlcNAc...) asparagine glycans are attached at residues asparagine 309, asparagine 345, asparagine 360, asparagine 424, and asparagine 540. 3 disulfides stabilise this stretch: cysteine 336–cysteine 375, cysteine 420–cysteine 465, and cysteine 512–cysteine 561. A helical membrane pass occupies residues 590 to 610 (GLIAVVVIGVVIAALIVAAKY). At 611–678 (YFLRKAKAKQ…EPHQENGRLP (68 aa)) the chain is on the cytoplasmic side. Residues 634 to 653 (NSNSEKVSEPSVETNSHYDS) are disordered. Positions 658-663 (VEYTEV) match the ITIM motif motif. Tyrosine 660 is modified (phosphotyrosine; by FER).

As to quaternary structure, trans-homodimer (via Ig-like C2-type 1 and Ig-like C2-type 2 domains); trans-homodimerization is required for cell-cell interaction. Forms a complex with BDKRB2 and GNAQ. Interacts with BDKRB2 and GNAQ. Interacts with PTPN11. Interacts with FER. Interacts with CD177; the interaction is Ca(2+)-dependent; the interaction is direct. In terms of processing, phosphorylated on Ser and Tyr residues after cellular activation. In endothelial cells Fyn mediates mechanical-force (stretch or pull) induced tyrosine phosphorylation. Phosphorylated on tyrosine residues by FER and FES in response to FCER1 activation. Post-translationally, palmitoylation by ZDHHC21 is necessary for cell surface expression in endothelial cells and enrichment in membrane rafts.

It localises to the cell membrane. The protein resides in the membrane raft. The protein localises to the cell junction. In terms of biological role, cell adhesion molecule which is required for leukocyte transendothelial migration (TEM) under most inflammatory conditions. Tyr-660 plays a critical role in TEM and is required for efficient trafficking of PECAM1 to and from the lateral border recycling compartment (LBRC) and is also essential for the LBRC membrane to be targeted around migrating leukocytes. Trans-homophilic interaction may play a role in endothelial cell-cell adhesion via cell junctions. Heterophilic interaction with CD177 plays a role in transendothelial migration of neutrophils. Homophilic ligation of PECAM1 prevents macrophage-mediated phagocytosis of neighboring viable leukocytes by transmitting a detachment signal. Promotes macrophage-mediated phagocytosis of apoptotic leukocytes by tethering them to the phagocytic cells; PECAM1-mediated detachment signal appears to be disabled in apoptotic leukocytes. Modulates bradykinin receptor BDKRB2 activation. Regulates bradykinin- and hyperosmotic shock-induced ERK1/2 activation in endothelial cells. Induces susceptibility to atherosclerosis. This chain is Platelet endothelial cell adhesion molecule (Pecam1), found in Rattus norvegicus (Rat).